We begin with the raw amino-acid sequence, 590 residues long: Aspartate--tRNA(Asp/Asn) ligase (590 aa).

Glu-176 serves as a coordination point for L-aspartate. Residues 200–203 form an aspartate region; that stretch reads QLFK. L-aspartate contacts are provided by Arg-222 and His-451. 222 to 224 lines the ATP pocket; sequence RDE. Residue Glu-485 coordinates ATP. Arg-492 contributes to the L-aspartate binding site. 537–540 lines the ATP pocket; that stretch reads GIDR.

The protein belongs to the class-II aminoacyl-tRNA synthetase family. Type 1 subfamily. As to quaternary structure, homodimer.

Its subcellular location is the cytoplasm. The enzyme catalyses tRNA(Asx) + L-aspartate + ATP = L-aspartyl-tRNA(Asx) + AMP + diphosphate. In terms of biological role, aspartyl-tRNA synthetase with relaxed tRNA specificity since it is able to aspartylate not only its cognate tRNA(Asp) but also tRNA(Asn). Reaction proceeds in two steps: L-aspartate is first activated by ATP to form Asp-AMP and then transferred to the acceptor end of tRNA(Asp/Asn). This Ehrlichia ruminantium (strain Welgevonden) protein is Aspartate--tRNA(Asp/Asn) ligase.